The chain runs to 1493 residues: DNA excision repair protein ERCC-6 (1493 aa).

Positions 1–39 (MPNEGIPHSSQTQEQDCLQSQPVSNNEEMAIKQESGGDG) are disordered. Residues 1-510 (MPNEGIPHSS…GFLFKKLFKY (510 aa)) form an N-terminal domain; essential for its chromatin remodeling activity region. Residues 8–27 (HSSQTQEQDCLQSQPVSNNE) show a composition bias toward polar residues. Serine 10 carries the phosphoserine; by ATM modification. Residue serine 158 is modified to Phosphoserine; by CDK2. The residue at position 170 (lysine 170) is an N6-methylated lysine; by EHMT2. A Glycyl lysine isopeptide (Lys-Gly) (interchain with G-Cter in SUMO3) cross-link involves residue lysine 205. Lysine 255 is covalently cross-linked (Glycyl lysine isopeptide (Lys-Gly) (interchain with G-Cter in SUMO2)). Disordered stretches follow at residues 287–323 (KQGC…VLSK) and 344–453 (GKVG…GRYR). Lysine 297 carries the post-translational modification N6-methylated lysine; by EHMT2. Residues 353–363 (RPWESDMRPEA) show a composition bias toward basic and acidic residues. The segment covering 364–392 (EGDSEGEESEYFPTEEEEEEEDDEVEGAE) has biased composition (acidic residues). Residues serine 429 and serine 430 each carry the phosphoserine modification. At lysine 448 the chain carries N6-methylated lysine; by EHMT2. Phosphoserine occurs at positions 486 and 489. Residues 519-695 (WELHCQQAGG…WSLFDFIFPG (177 aa)) enclose the Helicase ATP-binding domain. 532-539 (DEMGLGKT) lines the ATP pocket. The DEAH box motif lies at 646-649 (DEGH). Residues 843-1002 (VVESLLKIWH…RRFFKSNDLY (160 aa)) enclose the Helicase C-terminal domain. 3 disordered regions span residues 1042 to 1147 (PAFG…DESI), 1181 to 1247 (HKSK…EQSN), and 1318 to 1384 (RGIS…SGPL). Lysine 1054 carries the N6-methylated lysine; by EHMT2 modification. Over residues 1123 to 1141 (ISGNGECSNSSGTGKTSMP) the composition is skewed to polar residues. Serine 1142 is subject to Phosphoserine. Positions 1200–1210 (LRPKQKPKNSK) are enriched in basic residues. Composition is skewed to basic and acidic residues over residues 1211-1221 (HCRDAKFEGTR) and 1232-1247 (QKQD…EQSN). The segment covering 1327–1336 (KKSRFGKKRN) has biased composition (basic residues). A compositionally biased stretch (polar residues) spans 1337–1351 (SNFSVQHPSSTSPTE). Position 1348 is a phosphoserine (serine 1348). Positions 1352 to 1376 (KCQDGIMKKEGKDNVPEHFSGRAED) are enriched in basic and acidic residues. The CSA-interacting motif (CIM) motif lies at 1386–1398 (SSSLLAKMRARNH). The ubiquitin-binding domain (UBD) stretch occupies residues 1400–1428 (ILPERLESESGHLQEASALLPTTEHDDLL). The winged-helix domain (WHD) stretch occupies residues 1429-1493 (VEMRNFIAFQ…GIWKLKPEYC (65 aa)). An essential for its interaction with RNA polymerase II, transcription-coupled nucleotide excision repair activity, association with chromatin after UV irradiation and for mediating the UV-induced translocation of ERRC8 to the nuclear matrix region spans residues 1446 to 1493 (STREILQEFESKLSASQSCVFRELLRNLCTFHRTSGGEGIWKLKPEYC).

This sequence belongs to the SNF2/RAD54 helicase family. Homodimer. Binds DNA. Interacts with ERCC8. Interacts with RNA polymerase II; interaction is enhanced by UV irradiation. Component of the B-WICH complex, at least composed of SMARCA5/SNF2H, BAZ1B/WSTF, SF3B1, DEK, MYO1C, ERCC6, MYBBP1A and DDX21. Interacts with KIAA1530/UVSSA. Interacts with ELOA and CUL5; the interaction is induced by DNA damaging agents or by inhibitors of RNA polymerase II elongation. Interacts (via WHD region) with RIF1. Interacts with SMARCC2/BAF170, SMARCB1/BAF47 and the neuron-specific chromatin remodeling complex (nBAF complex). Interacts with ERCC5/XPG (via C-terminus); the interaction stimulates ERCC6/CSB binding to the DNA repair bubble and ERCC6/CSB ATPase activity. May form a complex composed of RNA polymerase II, ERCC6/CSB and ERCC5/XPG which associates with the DNA repair bubble during transcription-coupled nucleotide excision repair. Interacts with CAND1, CSTF1, DDX3X, DDX5, DDX17, DDX23, DHX36, HDAC1, HNRNPU, MTA2, PRPF3, PSMD3, RBBP4, SFPQ, SMARCA1, SMARCA2, TOP1, USP7, XRCC5, COPS3, COPS4, COPS6, DDX1, DDX41, GATAD2A, GATAD2B, PRPF4, PSMC5, SF3B2, CTR9, NONO, PSMD12 and TOP2A. Post-translationally, phosphorylated in a cell cycle-dependent manner at Ser-158 by cyclin A-CDK2 and at Ser-10 by ATM in response to DNA damage. Phosphorylation at these two sites promotes the intramolecular interaction of the N-terminal domain with the helicase ATP-binding domain, thereby probably releasing the inhibitory effect of the N-terminal domain on its ATPase activity. Phosphorylation is essential for its chromatin remodeling activity. Ubiquitinated at the C-terminus. Ubiquitination by the CSA complex leads to ERCC6 proteasomal degradation in a UV-dependent manner. Stabilized following interaction with KIAA1530/UVSSA, which promotes recruitment of deubiquitinating enzyme USP7, leading to deubiquitination of ERCC6 thereby preventing UV-induced degradation of ERCC6 by the proteasome. In terms of processing, sumoylation at Lys-205 in an UV-radiation-dependent manner is essential for its transcription-coupled nucleotide excision repair activity.

The protein localises to the nucleus. The protein resides in the chromosome. The catalysed reaction is ATP + H2O = ADP + phosphate + H(+). Functionally, essential factor involved in transcription-coupled nucleotide excision repair (TC-NER), a process during which RNA polymerase II-blocking lesions are rapidly removed from the transcribed strand of active genes. Plays a central role in the initiation of the TC-NER process: specifically recognizes and binds RNA polymerase II stalled at a lesion, and mediates recruitment of ERCC8/CSA, initiating DNA damage excision by TFIIH recruitment. Upon DNA-binding, it locally modifies DNA conformation by wrapping the DNA around itself, thereby modifying the interface between stalled RNA polymerase II and DNA. Acts as a chromatin remodeler at DSBs; DNA-dependent ATPase-dependent activity is essential for this function. Plays an important role in regulating the choice of the DNA double-strand breaks (DSBs) repair pathway and G2/M checkpoint activation; DNA-dependent ATPase activity is essential for this function. Regulates the DNA repair pathway choice by inhibiting non-homologous end joining (NHEJ), thereby promoting the homologous recombination (HR)-mediated repair of DSBs during the S/G2 phases of the cell cycle. Mediates the activation of the ATM- and CHEK2-dependent DNA damage responses thus preventing premature entry of cells into mitosis following the induction of DNA DSBs. Remodels chromatin by evicting histones from chromatin flanking DSBs, limiting RIF1 accumulation at DSBs thereby promoting BRCA1-mediated HR. Required for stable recruitment of ELOA and CUL5 to DNA damage sites. Also involved in UV-induced translocation of ERCC8 to the nuclear matrix. Essential for neuronal differentiation and neuritogenesis; regulates transcription and chromatin remodeling activities required during neurogenesis. This Homo sapiens (Human) protein is DNA excision repair protein ERCC-6.